We begin with the raw amino-acid sequence, 330 residues long: Tryptophan--tRNA ligase (330 aa).

ATP is bound by residues Gln10–Ser12 and Gly18–Asn19. A 'HIGH' region motif is present at residues Pro11–Asn19. An L-tryptophan-binding site is contributed by Asp133. ATP is bound by residues Gly145 to Asp147, Ile184, and Lys193 to Ser197. The short motif at Lys193–Ser197 is the 'KMSKS' region element.

Belongs to the class-I aminoacyl-tRNA synthetase family. Homodimer.

The protein resides in the cytoplasm. It carries out the reaction tRNA(Trp) + L-tryptophan + ATP = L-tryptophyl-tRNA(Trp) + AMP + diphosphate + H(+). Catalyzes the attachment of tryptophan to tRNA(Trp). This Halalkalibacterium halodurans (strain ATCC BAA-125 / DSM 18197 / FERM 7344 / JCM 9153 / C-125) (Bacillus halodurans) protein is Tryptophan--tRNA ligase.